The sequence spans 292 residues: Ribosomal protein L11 methyltransferase (292 aa).

4 residues coordinate S-adenosyl-L-methionine: threonine 136, glycine 159, aspartate 181, and asparagine 228.

This sequence belongs to the methyltransferase superfamily. PrmA family.

The protein resides in the cytoplasm. The catalysed reaction is L-lysyl-[protein] + 3 S-adenosyl-L-methionine = N(6),N(6),N(6)-trimethyl-L-lysyl-[protein] + 3 S-adenosyl-L-homocysteine + 3 H(+). In terms of biological role, methylates ribosomal protein L11. This is Ribosomal protein L11 methyltransferase from Agrobacterium fabrum (strain C58 / ATCC 33970) (Agrobacterium tumefaciens (strain C58)).